The following is a 337-amino-acid chain: MRVLGIETSCDETGIAIYDDEKGLLANQLYSQVKLHADYGGVVPELASRDHVRKTVPLIQAALKESGLTAKEIDAVAYTAGPGLVGALLVGATVGRSLAFAWNVPAIPVHHMEGHLLAPMLEDNPPEFPFVALLVSGGHTQLISVTGIGQYALLGESIDDAAGEAFDKTAKLLGLDYPGGPMLSKMAAQGTAGRFVFPRPMTDRPGLDFSFSGLKTFAANTIRSNGDDEQTRADIARAFEDAVVDTLMIKCKRALDQTGFKRLVMAGGVSANRTLRAKLAEMMQKRRGEVFYARPEFCTDNGAMIAYAGMVRFKAGATADLGVSVLPRWPLAELPAA.

2 residues coordinate Fe cation: histidine 111 and histidine 115. Residues 134-138 (LVSGG), aspartate 167, glycine 180, and asparagine 272 each bind substrate. Residue aspartate 300 coordinates Fe cation.

This sequence belongs to the KAE1 / TsaD family. It depends on Fe(2+) as a cofactor.

The protein localises to the cytoplasm. The enzyme catalyses L-threonylcarbamoyladenylate + adenosine(37) in tRNA = N(6)-L-threonylcarbamoyladenosine(37) in tRNA + AMP + H(+). In terms of biological role, required for the formation of a threonylcarbamoyl group on adenosine at position 37 (t(6)A37) in tRNAs that read codons beginning with adenine. Is involved in the transfer of the threonylcarbamoyl moiety of threonylcarbamoyl-AMP (TC-AMP) to the N6 group of A37, together with TsaE and TsaB. TsaD likely plays a direct catalytic role in this reaction. The protein is tRNA N6-adenosine threonylcarbamoyltransferase of Citrobacter koseri (strain ATCC BAA-895 / CDC 4225-83 / SGSC4696).